The primary structure comprises 634 residues: UPF0329 protein ECU07_1850/ECU10_0050 (634 aa).

Basic and acidic residues-rich tracts occupy residues 354 to 365 (REEREKREESKG) and 397 to 407 (GESKEEDRGEE). The tract at residues 354 to 438 (REEREKREES…KGSGEKRISE (85 aa)) is disordered. Residues 408–417 (GGVEAEDPLE) show a composition bias toward acidic residues.

It belongs to the UPF0329 family.

The sequence is that of UPF0329 protein ECU07_1850/ECU10_0050 from Encephalitozoon cuniculi (strain GB-M1) (Microsporidian parasite).